The following is a 506-amino-acid chain: Cysteine--tRNA ligase (506 aa).

Cysteine 43 provides a ligand contact to Zn(2+). The short motif at 45 to 55 (VTVYDLCHLGH) is the 'HIGH' region element. Positions 237, 262, and 266 each coordinate Zn(2+). Residues 294 to 298 (KMSKS) carry the 'KMSKS' region motif. Lysine 297 is an ATP binding site.

This sequence belongs to the class-I aminoacyl-tRNA synthetase family. As to quaternary structure, monomer. It depends on Zn(2+) as a cofactor.

The protein localises to the cytoplasm. It catalyses the reaction tRNA(Cys) + L-cysteine + ATP = L-cysteinyl-tRNA(Cys) + AMP + diphosphate. This chain is Cysteine--tRNA ligase, found in Synechococcus sp. (strain JA-3-3Ab) (Cyanobacteria bacterium Yellowstone A-Prime).